A 315-amino-acid chain; its full sequence is Putative steroid dehydrogenase 3 (315 aa).

47 to 76 (ASWAVITGGTDGIGKSFSFELAKRGFNIYI) contributes to the NADP(+) binding site. The active site involves Tyr-202.

Belongs to the short-chain dehydrogenases/reductases (SDR) family. 17-beta-HSD 3 subfamily.

This Caenorhabditis elegans protein is Putative steroid dehydrogenase 3 (stdh-3).